Reading from the N-terminus, the 343-residue chain is MLTNPSQLILRNSDLFAGQNVLVLNYEGDLLPKQLLESAKKVTALSLDYHHHLIMSPYAEQNLALHFGHMLPDEEQFDTVIIYYPKAKALASYLLNLAGVHLKPNGQLLVVGENKGGIRSIVKQVPDYFDSPFKQDSARHCLLYVSQLVEKAPQINLSDWVRNYQLETPQGEITICNLVGVFSEKRLDEGTKLLLSHLPKMSGRVLDFGCGAGVITAALLKAQPELKVECVDINAMAIESCKLTLAANNFTADTYPSDGLTQTKGLFNGIISNPPFHDGLRSTTDIAKNFVKDSVQKLKKGGVWHIVANRHLPYSDSISTHFKQVNVSAENNRYKVYSNKINS.

The protein belongs to the methyltransferase superfamily. RsmC family. As to quaternary structure, monomer.

The protein resides in the cytoplasm. The enzyme catalyses guanosine(1207) in 16S rRNA + S-adenosyl-L-methionine = N(2)-methylguanosine(1207) in 16S rRNA + S-adenosyl-L-homocysteine + H(+). Functionally, specifically methylates the guanine in position 1207 of 16S rRNA in the 30S particle. The chain is Ribosomal RNA small subunit methyltransferase C from Shewanella sediminis (strain HAW-EB3).